A 183-amino-acid chain; its full sequence is Ferritin heavy chain (183 aa).

Met1 carries the N-acetylmethionine modification. At Thr2 the chain carries N-acetylthreonine; in Ferritin heavy chain, N-terminally processed. Residues 11-160 (QNYHQDSEAA…DHVTNLRKMG (150 aa)) form the Ferritin-like diiron domain. Residues Glu28, Glu63, His66, Glu108, and Gln142 each coordinate Fe cation. Residues Ser179 and Ser183 each carry the phosphoserine modification.

It belongs to the ferritin family. In terms of assembly, oligomer of 24 subunits. There are two types of subunits: L (light) chain and H (heavy) chain. The major chain can be light or heavy, depending on the species and tissue type. The functional molecule forms a roughly spherical shell with a diameter of 12 nm and contains a central cavity into which the insoluble mineral iron core is deposited. Interacts with NCOA4; NCOA4 promotes targeting of the iron-binding ferritin complex to autolysosomes following starvation or iron depletion.

The protein resides in the cytoplasm. Its subcellular location is the lysosome. The protein localises to the cytoplasmic vesicle. It localises to the autophagosome. The catalysed reaction is 4 Fe(2+) + O2 + 4 H(+) = 4 Fe(3+) + 2 H2O. Stores iron in a soluble, non-toxic, readily available form. Important for iron homeostasis. Has ferroxidase activity. Iron is taken up in the ferrous form and deposited as ferric hydroxides after oxidation. Also plays a role in delivery of iron to cells. Mediates iron uptake in capsule cells of the developing kidney. Delivery to lysosomes is mediated by the cargo receptor NCOA4 for autophagic degradation and release of iron. This is Ferritin heavy chain (FTH1) from Felis catus (Cat).